We begin with the raw amino-acid sequence, 509 residues long: ATP synthase subunit alpha (509 aa).

Gly-169–Thr-176 lines the ATP pocket.

Belongs to the ATPase alpha/beta chains family. In terms of assembly, F-type ATPases have 2 components, CF(1) - the catalytic core - and CF(0) - the membrane proton channel. CF(1) has five subunits: alpha(3), beta(3), gamma(1), delta(1), epsilon(1). CF(0) has three main subunits: a(1), b(2) and c(9-12). The alpha and beta chains form an alternating ring which encloses part of the gamma chain. CF(1) is attached to CF(0) by a central stalk formed by the gamma and epsilon chains, while a peripheral stalk is formed by the delta and b chains.

It is found in the cell inner membrane. It carries out the reaction ATP + H2O + 4 H(+)(in) = ADP + phosphate + 5 H(+)(out). Its function is as follows. Produces ATP from ADP in the presence of a proton gradient across the membrane. The alpha chain is a regulatory subunit. In Brucella anthropi (strain ATCC 49188 / DSM 6882 / CCUG 24695 / JCM 21032 / LMG 3331 / NBRC 15819 / NCTC 12168 / Alc 37) (Ochrobactrum anthropi), this protein is ATP synthase subunit alpha.